A 482-amino-acid polypeptide reads, in one-letter code: E3 ubiquitin-protein ligase makorin-1 (482 aa).

The span at 26 to 38 (ASPTPIPTVTAPS) shows a compositional bias: low complexity. Positions 26–52 (ASPTPIPTVTAPSLGAGGGGGGSDGSG) are disordered. The segment covering 40-52 (GAGGGGGGSDGSG) has biased composition (gly residues). C3H1-type zinc fingers lie at residues 55-82 (WTKQ…HDLS), 84-111 (SPYS…HSKP), and 208-235 (ETKK…HGDS). The interval 236–263 (CDMCGLQVLHPMDAAQRSQHIKSCIEAH) is makorin-type Cys-His. An RING-type zinc finger spans residues 281–335 (CGICMEVVYEKANPSERRFGILSNCNHTYCLKCIRKWRSAKQFESKIIKSCPECR). The C3H1-type 4 zinc finger occupies 364 to 393 (AMSNKACRYFDEGRGSCPFGGNCFYKHAYP).

Interacts with p53/TP53 and CDKN1A. Interacts with TERT, modulating telomere length homeostasis. Auto-ubiquitinated; which leads to proteasomal degradation. In terms of tissue distribution, ubiquitous.

It carries out the reaction S-ubiquitinyl-[E2 ubiquitin-conjugating enzyme]-L-cysteine + [acceptor protein]-L-lysine = [E2 ubiquitin-conjugating enzyme]-L-cysteine + N(6)-ubiquitinyl-[acceptor protein]-L-lysine.. It functions in the pathway protein modification; protein ubiquitination. Its function is as follows. E3 ubiquitin ligase catalyzing the covalent attachment of ubiquitin moieties onto substrate proteins. These substrates include FILIP1, p53/TP53, CDKN1A and TERT. Keeps cells alive by suppressing p53/TP53 under normal conditions, but stimulates apoptosis by repressing CDKN1A under stress conditions. Acts as a negative regulator of telomerase. Has negative and positive effects on RNA polymerase II-dependent transcription. This Homo sapiens (Human) protein is E3 ubiquitin-protein ligase makorin-1 (MKRN1).